A 138-amino-acid polypeptide reads, in one-letter code: uncharacterized protein (138 aa).

Residues 84–104 (PPKKTSPATSSSLKPRPGPRG) are disordered. Residues 85–98 (PKKTSPATSSSLKP) show a composition bias toward low complexity.

To M.pneumoniae MPN_413 and MPN_463.

This is an uncharacterized protein from Mycoplasma pneumoniae (strain ATCC 29342 / M129 / Subtype 1) (Mycoplasmoides pneumoniae).